The following is a 347-amino-acid chain: Dihydroorotate dehydrogenase (quinone) (347 aa).

FMN contacts are provided by residues 62-66 and threonine 86; that span reads AGLDK. Lysine 66 is a binding site for substrate. 111–115 is a binding site for substrate; it reads NRMGF. The FMN site is built by asparagine 142 and asparagine 175. Asparagine 175 lines the substrate pocket. The active-site Nucleophile is serine 178. Asparagine 180 is a binding site for substrate. FMN-binding residues include lysine 220 and threonine 248. 249 to 250 is a binding site for substrate; that stretch reads NT. FMN contacts are provided by residues glycine 271, glycine 300, and 321 to 322; that span reads YS.

Belongs to the dihydroorotate dehydrogenase family. Type 2 subfamily. As to quaternary structure, monomer. FMN is required as a cofactor.

It is found in the cell membrane. It carries out the reaction (S)-dihydroorotate + a quinone = orotate + a quinol. It participates in pyrimidine metabolism; UMP biosynthesis via de novo pathway; orotate from (S)-dihydroorotate (quinone route): step 1/1. Its function is as follows. Catalyzes the conversion of dihydroorotate to orotate with quinone as electron acceptor. The polypeptide is Dihydroorotate dehydrogenase (quinone) (Dechloromonas aromatica (strain RCB)).